The following is a 318-amino-acid chain: Myoblast determination protein 1 (318 aa).

A Peptide (Met-Gly) (interchain with G-Cter in ubiquitin) cross-link involves residue Met-1. N6-methyllysine; by EHMT2 is present on Lys-104. A bHLH domain is found at Asp-109–Leu-160. 2 disordered regions span residues Ala-175–Tyr-225 and Ala-265–Leu-318. A compositionally biased stretch (polar residues) spans Ser-196–Ser-206. Residues Ala-265–Pro-274 are compositionally biased toward low complexity. Polar residues-rich tracts occupy residues Leu-287 to Ser-298 and Ala-307 to Leu-318.

In terms of assembly, interacts with SUV39H1. Efficient DNA binding requires dimerization with another bHLH protein. Seems to form active heterodimers with ITF-2. Interacts with DDX5. Interacts with CHD2. Interacts with TSC22D3 isoform 1 and isoform 4. Interacts with SETD3. Interacts with P-TEFB complex; promotes the transcriptional activity of MYOD1 through its CDK9-mediated phosphorylation. Interacts with CSRP3. Interacts with NUPR1. Post-translationally, acetylated by a complex containing EP300 and PCAF. The acetylation is essential to activate target genes. Conversely, its deacetylation by SIRT1 inhibits its function. In terms of processing, ubiquitinated on the N-terminus; which is required for proteasomal degradation. Phosphorylated by CDK9. This phosphorylation promotes its function in muscle differentiation. Post-translationally, methylation at Lys-104 by EHMT2/G9a inhibits myogenic activity.

Its subcellular location is the nucleus. Functionally, acts as a transcriptional activator that promotes transcription of muscle-specific target genes and plays a role in muscle differentiation. Together with MYF5 and MYOG, co-occupies muscle-specific gene promoter core region during myogenesis. Induces fibroblasts to differentiate into myoblasts. Interacts with and is inhibited by the twist protein. This interaction probably involves the basic domains of both proteins. The chain is Myoblast determination protein 1 (Myod1) from Mus musculus (Mouse).